Here is an 82-residue protein sequence, read N- to C-terminus: Turripeptide IX-07 (82 aa).

The N-terminal stretch at 1 to 21 (MGFYMLLTVALLLTSLMNVEA) is a signal peptide. Residues 22 to 39 (TPVNQAERSALEKSGLGN) constitute a propeptide that is removed on maturation. 3 cysteine pairs are disulfide-bonded: Cys48-Cys70, Cys55-Cys74, and Cys60-Cys81.

In terms of tissue distribution, expressed by the venom duct.

It localises to the secreted. The polypeptide is Turripeptide IX-07 (Gemmula speciosa (Splendid gem-turris)).